The chain runs to 330 residues: MVKFFQPKIDPLPTGIDLTGKTAVITGASAGMGLEVTKQLLRLRLSTAILAVRNVTKGEACIKSLLQDRGIQTHNPKPTIKVMELDMDRYDSVQQFAKTLREEVPVVDLLILNAGVASLNFERSPSGHERVTQVNYCSNVLLVAELLPHLEAGAEQTGSPARISWVGSRSHETPSFEKKAPIEADEGVLEHMDKEEAFVPFQRYNDTKLLCVLFLYSLAPRLDPKKVVINTMCPGMVNTGMSNMLPLHLRLIFNVIKAIRARPVEVGGWIILNAALVAGPESHGKFLADKTITDKSAIVTSPMGQDIQKKLWEETITEMSKLTTLPPQFR.

NADP(+) contacts are provided by K57, D86, N113, Y204, and K208. The active-site Proton donor is Y204. K208 (lowers pKa of active site Tyr) is an active-site residue.

The protein belongs to the short-chain dehydrogenases/reductases (SDR) family.

Its pathway is secondary metabolite biosynthesis; terpenoid biosynthesis. Functionally, short chain dehydrogenase; part of the gene cluster that mediates the biosynthesis of yanuthone D, a fungal isoprenoid epoxycyclohexenone that acts as an antibiotic against fungi and bacteria. The first step of the pathway is the synthesis of 6-methylsalicylic acid (6-MSA) by the polyketide synthase yanA. 6-MSA is then converted to m-cresol by the decarboxylase yanB. The cytochrome P450 monooxygenase yanC then catalyzes the oxidation of m-cresol to toluquinol. Epoxidation of toluquinol is then performed by the short chain dehydrogenase yanD, with the help of yanE, and a further prenylation by yanG leads to 7-deacetoxyyanuthone A. The next step is the hydroxylation of C-22 of 7-deacetoxyyanuthone A by the cytochrome P450 monooxygenase yanH to yield 22-deacetylyanuthone A. O-Mevalon transferase yanI then attaches mevalon to the hydroxyl group of 22-deacetylyanuthone A to produce yanuthone E. Finally, the FAD-dependent monooxygenase yanF oxidizes the hydroxyl group at C15 of yanuthone E to form yanuthone D. Furthermore, several branching points in the pathway lead to the production of yanuthones F and G from 7-deacetoxyyanuthone A; yanuthones H and I from 22-deacetylyanuthone A; and yanuthone J from yanuthone E. YanD is also involved in the synthesis of yanuthone X1 which does not have 6-methylsalicylic acid (6-MSA) as precursor. In Aspergillus niger (strain ATCC 1015 / CBS 113.46 / FGSC A1144 / LSHB Ac4 / NCTC 3858a / NRRL 328 / USDA 3528.7), this protein is Short chain dehydrogenase yanD.